A 116-amino-acid polypeptide reads, in one-letter code: Protein SPIRAL1-like 1 (116 aa).

The segment covering Met1 to Ser12 has biased composition (gly residues). The interval Met1–Asn116 is disordered. The span at Ala27 to Ala43 shows a compositional bias: pro residues. Residues Pro44 to Ala60 show a composition bias toward low complexity. The span at Gly72–Phe90 shows a compositional bias: polar residues. Residues Pro103–Asn116 are compositionally biased toward gly residues.

This sequence belongs to the SPIRAL1 family.

Its function is as follows. Acts in maintaining the cortical microtubules organization essential for anisotropic cell growth. In Oryza sativa subsp. japonica (Rice), this protein is Protein SPIRAL1-like 1.